Reading from the N-terminus, the 399-residue chain is S-adenosylmethionine synthase (399 aa).

H15 is an ATP binding site. D17 provides a ligand contact to Mg(2+). E43 contacts K(+). E56 and Q99 together coordinate L-methionine. Residues 99–109 (QSPDIAGGVDH) are flexible loop. ATP contacts are provided by residues 175–177 (DAK), 242–243 (RF), D251, 257–258 (RK), A274, and K278. Position 251 (D251) interacts with L-methionine. K282 is an L-methionine binding site.

Belongs to the AdoMet synthase family. Homotetramer; dimer of dimers. The cofactor is Mg(2+). It depends on K(+) as a cofactor.

Its subcellular location is the cytoplasm. It catalyses the reaction L-methionine + ATP + H2O = S-adenosyl-L-methionine + phosphate + diphosphate. The protein operates within amino-acid biosynthesis; S-adenosyl-L-methionine biosynthesis; S-adenosyl-L-methionine from L-methionine: step 1/1. Functionally, catalyzes the formation of S-adenosylmethionine (AdoMet) from methionine and ATP. The overall synthetic reaction is composed of two sequential steps, AdoMet formation and the subsequent tripolyphosphate hydrolysis which occurs prior to release of AdoMet from the enzyme. In Lactobacillus helveticus (strain DPC 4571), this protein is S-adenosylmethionine synthase.